A 307-amino-acid polypeptide reads, in one-letter code: Protoheme IX farnesyltransferase (307 aa).

8 helical membrane-spanning segments follow: residues 32 to 52 (MGIV…ALHF), 65 to 85 (FFTI…NNYI), 108 to 128 (PGFA…FLLL), 131 to 151 (PMAV…YSLW), 158 to 178 (LNTV…WAAI), 186 to 206 (IAWM…LALA), 251 to 271 (LGIT…VLGF), and 287 to 307 (FVYS…VTFF).

It belongs to the UbiA prenyltransferase family. Protoheme IX farnesyltransferase subfamily. As to quaternary structure, interacts with CtaA.

It localises to the cell membrane. It carries out the reaction heme b + (2E,6E)-farnesyl diphosphate + H2O = Fe(II)-heme o + diphosphate. The protein operates within porphyrin-containing compound metabolism; heme O biosynthesis; heme O from protoheme: step 1/1. Its function is as follows. Converts heme B (protoheme IX) to heme O by substitution of the vinyl group on carbon 2 of heme B porphyrin ring with a hydroxyethyl farnesyl side group. The protein is Protoheme IX farnesyltransferase of Bacillus cereus (strain ATCC 10987 / NRS 248).